The sequence spans 107 residues: U1-lycotoxin-Ls1b (107 aa).

An N-terminal signal peptide occupies residues 1 to 20 (MMKALVVVALLVTLISYSSS). The propeptide occupies 21–41 (EGIDDLEADELLSLMANEQTR). 4 disulfides stabilise this stretch: Cys44/Cys59, Cys51/Cys68, Cys58/Cys86, and Cys70/Cys84.

It belongs to the neurotoxin 19 (CSTX) family. 04 (U1-Lctx) subfamily. In terms of tissue distribution, expressed by the venom gland.

The protein resides in the secreted. In Lycosa singoriensis (Wolf spider), this protein is U1-lycotoxin-Ls1b.